Reading from the N-terminus, the 436-residue chain is GTPase Der (436 aa).

EngA-type G domains follow at residues 3-168 and 177-352; these read PLIA…PESD and IRLA…QNRS. Residues 9-16, 56-60, 120-123, 183-190, 230-234, and 295-298 contribute to the GTP site; these read GRPNVGKS, DTGGY, NKAE, DTAGL, and NKWD. One can recognise a KH-like domain in the interval 353-436; it reads RKISTSALNR…VTISLRFMQK (84 aa).

Belongs to the TRAFAC class TrmE-Era-EngA-EngB-Septin-like GTPase superfamily. EngA (Der) GTPase family. As to quaternary structure, associates with the 50S ribosomal subunit.

Functionally, GTPase that plays an essential role in the late steps of ribosome biogenesis. The protein is GTPase Der of Chlorobium luteolum (strain DSM 273 / BCRC 81028 / 2530) (Pelodictyon luteolum).